The primary structure comprises 75 residues: ATP synthase subunit c (75 aa).

Transmembrane regions (helical) follow at residues 4-24 (GLIA…GLGQ) and 54-74 (AVAE…MFAF).

It belongs to the ATPase C chain family. As to quaternary structure, F-type ATPases have 2 components, F(1) - the catalytic core - and F(0) - the membrane proton channel. F(1) has five subunits: alpha(3), beta(3), gamma(1), delta(1), epsilon(1). F(0) has three main subunits: a(1), b(2) and c(10-14). The alpha and beta chains form an alternating ring which encloses part of the gamma chain. F(1) is attached to F(0) by a central stalk formed by the gamma and epsilon chains, while a peripheral stalk is formed by the delta and b chains.

It localises to the cell membrane. Functionally, f(1)F(0) ATP synthase produces ATP from ADP in the presence of a proton or sodium gradient. F-type ATPases consist of two structural domains, F(1) containing the extramembraneous catalytic core and F(0) containing the membrane proton channel, linked together by a central stalk and a peripheral stalk. During catalysis, ATP synthesis in the catalytic domain of F(1) is coupled via a rotary mechanism of the central stalk subunits to proton translocation. Its function is as follows. Key component of the F(0) channel; it plays a direct role in translocation across the membrane. A homomeric c-ring of between 10-14 subunits forms the central stalk rotor element with the F(1) delta and epsilon subunits. This is ATP synthase subunit c from Mycoplasmopsis agalactiae (strain NCTC 10123 / CIP 59.7 / PG2) (Mycoplasma agalactiae).